Here is a 193-residue protein sequence, read N- to C-terminus: Large ribosomal subunit protein eL19A (193 aa).

A disordered region spans residues 156–179 (QEQQDARRARAKAARQRRAKAVEE). Basic residues predominate over residues 164–174 (ARAKAARQRRA).

It belongs to the eukaryotic ribosomal protein eL19 family. As to quaternary structure, component of the large ribosomal subunit (LSU). Mature yeast ribosomes consist of a small (40S) and a large (60S) subunit. The 40S small subunit contains 1 molecule of ribosomal RNA (18S rRNA) and at least 33 different proteins. The large 60S subunit contains 3 rRNA molecules (25S, 5.8S and 5S rRNA) and at least 46 different proteins. eL19 lies in close proximity to the binding site for eukaryotic initiation factor eIF4G.

Its subcellular location is the cytoplasm. Functionally, component of the ribosome, a large ribonucleoprotein complex responsible for the synthesis of proteins in the cell. The small ribosomal subunit (SSU) binds messenger RNAs (mRNAs) and translates the encoded message by selecting cognate aminoacyl-transfer RNA (tRNA) molecules. The large subunit (LSU) contains the ribosomal catalytic site termed the peptidyl transferase center (PTC), which catalyzes the formation of peptide bonds, thereby polymerizing the amino acids delivered by tRNAs into a polypeptide chain. The nascent polypeptides leave the ribosome through a tunnel in the LSU and interact with protein factors that function in enzymatic processing, targeting, and the membrane insertion of nascent chains at the exit of the ribosomal tunnel. eL19 may play a role in the last stages of translation initiation, in particular subunit joining and shedding/releasing factors. This is Large ribosomal subunit protein eL19A (rpl1901) from Schizosaccharomyces pombe (strain 972 / ATCC 24843) (Fission yeast).